The sequence spans 512 residues: Glycerol-3-phosphate dehydrogenase (512 aa).

16 to 44 contacts FAD; it reads DVAVVGGGINGVGIAADAAGRGLSVFLCE.

This sequence belongs to the FAD-dependent glycerol-3-phosphate dehydrogenase family. Requires FAD as cofactor.

It is found in the cytoplasm. The catalysed reaction is a quinone + sn-glycerol 3-phosphate = dihydroxyacetone phosphate + a quinol. The protein is Glycerol-3-phosphate dehydrogenase (glpD) of Pseudomonas aeruginosa (strain ATCC 15692 / DSM 22644 / CIP 104116 / JCM 14847 / LMG 12228 / 1C / PRS 101 / PAO1).